The chain runs to 189 residues: Small ribosomal subunit protein uS5 (189 aa).

The S5 DRBM domain maps to 27–90; the sequence is FEERLLEAAR…EDAKKKTIRV (64 aa).

Belongs to the universal ribosomal protein uS5 family. Part of the 30S ribosomal subunit. Contacts proteins S4 and S8.

Functionally, with S4 and S12 plays an important role in translational accuracy. In terms of biological role, located at the back of the 30S subunit body where it stabilizes the conformation of the head with respect to the body. This is Small ribosomal subunit protein uS5 from Hydrogenobaculum sp. (strain Y04AAS1).